The sequence spans 117 residues: Large ribosomal subunit protein uL18 (117 aa).

It belongs to the universal ribosomal protein uL18 family. In terms of assembly, part of the 50S ribosomal subunit; part of the 5S rRNA/L5/L18/L25 subcomplex. Contacts the 5S and 23S rRNAs.

Its function is as follows. This is one of the proteins that bind and probably mediate the attachment of the 5S RNA into the large ribosomal subunit, where it forms part of the central protuberance. The chain is Large ribosomal subunit protein uL18 from Chromobacterium violaceum (strain ATCC 12472 / DSM 30191 / JCM 1249 / CCUG 213 / NBRC 12614 / NCIMB 9131 / NCTC 9757 / MK).